A 479-amino-acid chain; its full sequence is Cardiolipin synthase A (479 aa).

2 consecutive transmembrane segments (helical) span residues 8–28 (FFGY…LHAV) and 38–58 (IAWA…YLIF). 2 consecutive PLD phosphodiesterase domains span residues 218–245 (VNFR…GDEY) and 392–419 (QPGF…DNRS). Residues His-223, Lys-225, Asp-230, His-397, Lys-399, and Asp-404 contribute to the active site.

Belongs to the phospholipase D family. Cardiolipin synthase subfamily. ClsA sub-subfamily.

It localises to the cell inner membrane. It carries out the reaction 2 a 1,2-diacyl-sn-glycero-3-phospho-(1'-sn-glycerol) = a cardiolipin + glycerol. Its function is as follows. Catalyzes the reversible phosphatidyl group transfer from one phosphatidylglycerol molecule to another to form cardiolipin (CL) (diphosphatidylglycerol) and glycerol. The protein is Cardiolipin synthase A of Pseudomonas entomophila (strain L48).